Reading from the N-terminus, the 216-residue chain is Ribonuclease HII (216 aa).

Positions 33 to 216 constitute an RNase H type-2 domain; the sequence is WPVAGADEAG…RMSFRPFRQV (184 aa). A divalent metal cation is bound by residues aspartate 39, glutamate 40, and aspartate 130.

The protein belongs to the RNase HII family. The cofactor is Mn(2+). Mg(2+) serves as cofactor.

The protein resides in the cytoplasm. It carries out the reaction Endonucleolytic cleavage to 5'-phosphomonoester.. Its function is as follows. Endonuclease that specifically degrades the RNA of RNA-DNA hybrids. In Rhizobium meliloti (strain 1021) (Ensifer meliloti), this protein is Ribonuclease HII.